A 322-amino-acid chain; its full sequence is Secreted effector protein SseI (322 aa).

Interacts with host IQGAP1 and host TRIP6 (thyroid receptor-interacting protein 6).

It is found in the secreted. The protein localises to the host cytoplasm. Its function is as follows. Effector proteins function to alter host cell physiology and promote bacterial survival in host tissues. This protein is required to maintain a long-term chronic systemic infection in mice. It inhibits normal cell migration of primary macrophages and dendritic cells, by a mechanism that involves interaction with the host factor IQGAP1, an important regulator of the cytoskeleton and cell migration. Also accelerates the systemic spread of infection from the gastrointestinal tract to the bloodstream, probably by interacting with host TRIP6. The sequence is that of Secreted effector protein SseI (sseI) from Salmonella typhimurium (strain LT2 / SGSC1412 / ATCC 700720).